The chain runs to 25 residues: Galactose-binding lectin-2 (25 aa).

Homodimer. In terms of processing, N-glycosylated.

D-galactose specific lectin. Binds in decreasing order of affinity: melibiose, N-acetyllactosamine, D-galacturonic acid, D-galactose, methyl-alpha-D-galactoside, D-galactose, methyl-alpha-D-galactopyranoside, methyl-beta-D-galactopyranoside and lactose. Binds also the glycoproteins globotriose, asialofetuin and mucin. Possesses glycan-dependent cytotoxic activity against Burkitt's lymphoma Raji cells and erythroleukemia K562 cells. Has calcium-independent hemagglutinating activity towards human erythrocytes. The chain is Galactose-binding lectin-2 from Aplysia kurodai (Kuroda's sea hare).